The primary structure comprises 896 residues: Translation initiation factor IF-2 (896 aa).

Residues 49 to 310 (LKKEHGDTSG…MQQGFDKSAT (262 aa)) are disordered. Polar residues predominate over residues 57–66 (SGETEPTRLT). Composition is skewed to basic and acidic residues over residues 101-174 (STIE…KDMN), 184-240 (AKKE…KSAD), and 250-263 (REAE…DEKA). The segment covering 284-295 (RNQRGRGGKGKL) has biased composition (basic residues). The region spanning 395–564 (GRAPVVTIMG…LLQSEVLELT (170 aa)) is the tr-type G domain. A G1 region spans residues 404–411 (GHVDHGKT). 404–411 (GHVDHGKT) serves as a coordination point for GTP. Residues 429 to 433 (GITQH) are G2. The tract at residues 450 to 453 (DTPG) is G3. GTP-binding positions include 450–454 (DTPGH) and 504–507 (NKID). The interval 504–507 (NKID) is G4. The tract at residues 540 to 542 (SAK) is G5.

Belongs to the TRAFAC class translation factor GTPase superfamily. Classic translation factor GTPase family. IF-2 subfamily.

The protein localises to the cytoplasm. In terms of biological role, one of the essential components for the initiation of protein synthesis. Protects formylmethionyl-tRNA from spontaneous hydrolysis and promotes its binding to the 30S ribosomal subunits. Also involved in the hydrolysis of GTP during the formation of the 70S ribosomal complex. This Vibrio atlanticus (strain LGP32) (Vibrio splendidus (strain Mel32)) protein is Translation initiation factor IF-2.